The chain runs to 2178 residues: Toxin A (2178 aa).

The segment at 1 to 93 is four-helical bundle; it reads MLITREQLMK…RELIKNSRTS (93 aa). The region spanning 98–474 is the GT44 domain; sequence KNLSFIWIGG…KPEVNSTVFF (377 aa). The interval 98–474 is glucosyltransferase region; sequence KNLSFIWIGG…KPEVNSTVFF (377 aa). The tract at residues 98–474 is N-acetylglucosaminyltransferase region; sequence KNLSFIWIGG…KPEVNSTVFF (377 aa). UDP-N-acetyl-alpha-D-glucosamine-binding positions include 103-105, asparagine 141, 267-271, and 284-286; these read IWI, SDILR, and DLD. The Mg(2+) site is built by aspartate 284, aspartate 286, and glutamate 520. 523 to 525 is a UDP-N-acetyl-alpha-D-glucosamine binding site; the sequence is SSW. Residues 549-806 are autoprocessing region; it reads NYEDGLNFNK…RVEQLNKVAE (258 aa). 1D-myo-inositol hexakisphosphate-binding residues include asparagine 557, lysine 607, and lysine 651. The 214-residue stretch at 574-787 folds into the Peptidase C80 domain; it reads VNSTKIYENY…QISNKYVVYW (214 aa). Histidine 657 acts as the For protease activity in catalysis. Catalysis depends on cysteine 707, which acts as the Nucleophile; for protease activity. Residues 758–759 and lysine 782 contribute to the 1D-myo-inositol hexakisphosphate site; that span reads KR. The segment at 807-1485 is translocation region; the sequence is FAKDINSIIQ…VYMEGKIFLN (679 aa). 14 Cell wall-binding repeats span residues 1799–1818, 1820–1839, 1870–1889, 1890–1909, 1910–1929, 1931–1950, 1951–1970, 2004–2023, 2024–2043, 2045–2060, 2064–2083, 2114–2133, 2134–2153, and 2155–2174; these read EYGWINIDSRWYFFDSINLI, KKGYQEIEGERYYFNPNTGV, YTGWLTLDGNKYYFQSNSKA, VTGLQKISDKYYYFNDNGQM, QIKWQIINNNKYYFDGNTGE, IIGWFNNNKERYYFDSEGRL, LTGYQVIGDKSYYFSDNING, YKGWLDLNGNKYYFNSDSIA, VTGSYNIKGIQYYFNPKTAV, TNGWYTLDNNNYYVSN, VLGYQDIDGKGYYFDPSTGI, YTGWLHLNGNKYYFGYYNSA, VTGWRVLGGKRYFFNIKTGA, and TTGLLTLSGKRYYFNEKGEQ.

Belongs to the clostridial glucosylating toxin (LCGT) family. It depends on Mn(2+) as a cofactor. Requires Mg(2+) as cofactor. Undergoes autocatalytic cleavage to release the N-terminal part (N-acetylglucosaminyltransferase TcdA), which constitutes the active part of the toxin, in the host cytosol. 1D-myo-inositol hexakisphosphate-binding (InsP6) activates the peptidase C80 domain and promotes autoprocessing.

The protein localises to the secreted. It localises to the host endosome membrane. It is found in the host cytoplasm. The protein resides in the host cytosol. Its subcellular location is the host cell membrane. The enzyme catalyses L-threonyl-[protein] + UDP-N-acetyl-alpha-D-glucosamine = 3-O-(N-acetyl-alpha-D-glucosaminyl)-L-threonyl-[protein] + UDP + H(+). Its activity is regulated as follows. Protease activity is activated upon binding to 1D-myo-inositol hexakisphosphate (InsP6), which induces conformational reorganization. Its function is as follows. Precursor of a cytotoxin, which enters into host cells and mediates autoprocessing to release the active toxin (N-acetylglucosaminyltransferase TcdA) into the host cytosol. Once entered into host cells, acidification in the endosome promotes the membrane insertion of the translocation region and formation of a pore, leading to translocation of the GT44 and peptidase C80 domains across the endosomal membrane. This activates the peptidase C80 domain and autocatalytic processing, releasing the N-terminal part (N-acetylglucosaminyltransferase TcdA), which constitutes the active part of the toxin, in the cytosol. Functionally, active form of the toxin, which is released into the host cytosol following autoprocessing and inactivates small GTPases. Acts by mediating monoglycosylation of small GTPases of the Rho family (Rac1, RhoA, RhoG and Cdc42) in host cells at the conserved threonine residue located in the switch I region ('Thr-37/35'), using UDP-N-acetyl-alpha-D-glucosamine as the sugar donor. Monoglycosylation of host small GTPases completely prevents the recognition of the downstream effector, blocking the GTPases in their inactive form, leading to actin cytoskeleton disruption and cell death. This Clostridium novyi protein is Toxin A (tcdA).